Reading from the N-terminus, the 470-residue chain is Flotillin-like protein 1 (470 aa).

Cys-35 is lipidated: S-palmitoyl cysteine. Residues 305–354 (EYETKVQEANWELYNKQKQAEAVLYEKQKQAEAQKAQADAAFYSKQKEAE) are a coiled coil.

The protein belongs to the band 7/mec-2 family. Flotillin subfamily. In terms of processing, may be palmitoylated.

The protein localises to the cell membrane. It localises to the membrane. It is found in the caveola. Functionally, may act as a scaffolding protein within caveolar membranes, functionally participating in formation of caveolae or caveolae-like vesicles. The sequence is that of Flotillin-like protein 1 (FLOT1) from Arabidopsis thaliana (Mouse-ear cress).